We begin with the raw amino-acid sequence, 341 residues long: Probable membrane-associated kinase regulator 1 (341 aa).

Disordered stretches follow at residues 1 to 29 (MRRQ…FEFN), 67 to 122 (TLGS…SSRP), 158 to 185 (PKTN…KRMS), 206 to 230 (LSPK…NNIR), and 288 to 310 (RGGF…SVSS). Low complexity-rich tracts occupy residues 12-29 (PPQS…FEFN), 67-108 (TLGS…SFPL), and 167-180 (SSSS…APSS). The segment covering 208-230 (PKQSSNIKTESSSSLKDSGNNIR) has biased composition (polar residues). Residues 297–310 (SCSSSSSNNNSVSS) are compositionally biased toward low complexity.

As to quaternary structure, a C-terminus-derived peptide binds BRI1 in vitro.

It localises to the cell membrane. In terms of biological role, may negatively regulate brassinosteroid signaling. This chain is Probable membrane-associated kinase regulator 1 (MAKR1), found in Arabidopsis thaliana (Mouse-ear cress).